Consider the following 241-residue polypeptide: MAPK phosphothreonine lyase (241 aa).

Histidine 106 (proton donor) is an active-site residue. The Proton acceptor role is filled by lysine 136.

Belongs to the phosphothreonine lyase family.

The protein resides in the secreted. Secreted effector that irreversibly inactivates host MAP kinases by catalyzing the dephosphorylation of the phosphothreonine residue in the pT-X-pY motif present in MAPKs, via a beta-elimination reaction leading to a dehydrobutyrine residue. The chain is MAPK phosphothreonine lyase (spvC) from Salmonella choleraesuis (strain SC-B67).